Here is a 776-residue protein sequence, read N- to C-terminus: Probable E3 ubiquitin-protein ligase HECTD2 (776 aa).

Residues 1–46 form a disordered region; it reads MSEAVRVPSPATPLVVAAAAPEERKGKESEREKLPPIVSAGAGATA. The span at 7 to 20 shows a compositional bias: low complexity; sequence VPSPATPLVVAAAA. S9 is modified (phosphoserine). The segment covering 21-34 has biased composition (basic and acidic residues); that stretch reads PEERKGKESEREKL. The region spanning 437–776 is the HECT domain; the sequence is KRADLKKKLK…ISNSEGFGLE (340 aa). Residue C744 is the Glycyl thioester intermediate of the active site.

The enzyme catalyses S-ubiquitinyl-[E2 ubiquitin-conjugating enzyme]-L-cysteine + [acceptor protein]-L-lysine = [E2 ubiquitin-conjugating enzyme]-L-cysteine + N(6)-ubiquitinyl-[acceptor protein]-L-lysine.. It functions in the pathway protein modification; protein ubiquitination. In terms of biological role, E3 ubiquitin-protein ligase which accepts ubiquitin from an E2 ubiquitin-conjugating enzyme in the form of a thioester and then directly transfers the ubiquitin to targeted substrates. The protein is Probable E3 ubiquitin-protein ligase HECTD2 (HECTD2) of Pongo abelii (Sumatran orangutan).